A 241-amino-acid polypeptide reads, in one-letter code: Small ribosomal subunit protein uS2 (241 aa).

This sequence belongs to the universal ribosomal protein uS2 family.

In Escherichia coli (strain 55989 / EAEC), this protein is Small ribosomal subunit protein uS2.